A 518-amino-acid polypeptide reads, in one-letter code: Chromosomal replication initiator protein DnaA (518 aa).

The segment at 1 to 72 is domain I, interacts with DnaA modulators; that stretch reads MTLAEFWPLC…VREELAAGRS (72 aa). The tract at residues 72 to 180 is domain II; sequence SAFVFKPGEG…DAEEARYEQT (109 aa). Positions 181 to 397 are domain III, AAA+ region; that stretch reads NLSPDYTFDT…GAFNRVGASS (217 aa). 4 residues coordinate ATP: G225, G227, K228, and T229. Positions 398-518 are domain IV, binds dsDNA; the sequence is RFMNRPVIDI…YEKLLILIQN (121 aa).

It belongs to the DnaA family. In terms of assembly, oligomerizes as a right-handed, spiral filament on DNA at oriC.

It is found in the cytoplasm. In terms of biological role, plays an essential role in the initiation and regulation of chromosomal replication. ATP-DnaA binds to the origin of replication (oriC) to initiate formation of the DNA replication initiation complex once per cell cycle. Binds the DnaA box (a 9 base pair repeat at the origin) and separates the double-stranded (ds)DNA. Forms a right-handed helical filament on oriC DNA; dsDNA binds to the exterior of the filament while single-stranded (ss)DNA is stabiized in the filament's interior. The ATP-DnaA-oriC complex binds and stabilizes one strand of the AT-rich DNA unwinding element (DUE), permitting loading of DNA polymerase. After initiation quickly degrades to an ADP-DnaA complex that is not apt for DNA replication. Binds acidic phospholipids. This Neisseria meningitidis serogroup C / serotype 2a (strain ATCC 700532 / DSM 15464 / FAM18) protein is Chromosomal replication initiator protein DnaA.